The primary structure comprises 305 residues: Glycine--tRNA ligase alpha subunit (305 aa).

It belongs to the class-II aminoacyl-tRNA synthetase family. As to quaternary structure, tetramer of two alpha and two beta subunits.

It localises to the cytoplasm. The enzyme catalyses tRNA(Gly) + glycine + ATP = glycyl-tRNA(Gly) + AMP + diphosphate. The polypeptide is Glycine--tRNA ligase alpha subunit (Vibrio campbellii (strain ATCC BAA-1116)).